Consider the following 1262-residue polypeptide: Histone-lysine N-methyltransferase eggless (1262 aa).

The segment at 1–194 (MSGQPTAVDC…MEVDQDVEES (194 aa)) is disordered. Composition is skewed to basic and acidic residues over residues 26 to 41 (ASRE…KGEN), 50 to 61 (AAKDVEIEELTH), and 81 to 99 (APDE…KGEN). The span at 157–166 (SSISSPTSES) shows a compositional bias: low complexity. A compositionally biased stretch (basic and acidic residues) spans 167-179 (FPEKDEKTNKENE). Position 215 is a phosphoserine (Ser-215). Thr-217 is modified (phosphothreonine). Residues 353-420 (EKSDFSKNKL…LEKVQTTADK (68 aa)) adopt a coiled-coil conformation. Tudor domains are found at residues 529 to 602 (RLTI…SEKV) and 629 to 686 (QCTR…RETQ). The disordered stretch occupies residues 743-764 (SSAATPAGGRTNAGGVSTSNSA). The MBD domain maps to 818-884 (LDSYSPLAKP…DNFDFTPDLK (67 aa)). Residues 946–1018 (LCCDCEDDCS…NCLNRVVQFS (73 aa)) enclose the Pre-SET domain. Residues Cys-948, Cys-950, Cys-954, Cys-960, Cys-962, Cys-1000, Cys-1004, Cys-1006, and Cys-1010 each coordinate Zn(2+). An SET domain is found at 1021–1237 (MKLQVFKTSN…SGTELTWNYN (217 aa)). S-adenosyl-L-methionine-binding positions include 1031–1033 (RGW), Asp-1069, and Tyr-1071. The segment covering 1086–1097 (EGYESEVDHSDP) has biased composition (basic and acidic residues). A disordered region spans residues 1086–1148 (EGYESEVDHS…QSSELDSQER (63 aa)). The segment covering 1098–1113 (DAEEDNGGPDAEDDDD) has biased composition (acidic residues). Residues 1129-1141 (RSGSTQNSSTQSS) show a composition bias toward low complexity. S-adenosyl-L-methionine-binding positions include Arg-1191 and 1194–1195 (NH). Positions 1197, 1250, 1252, and 1257 each coordinate Zn(2+). Residues 1246 to 1262 (KVLYCQCGAPNCRLRLL) form the Post-SET domain.

This sequence belongs to the class V-like SAM-binding methyltransferase superfamily. Histone-lysine methyltransferase family. Suvar3-9 subfamily. As to expression, expressed in ovary (at protein level).

It localises to the nucleus. The protein resides in the chromosome. It carries out the reaction L-lysyl(9)-[histone H3] + 3 S-adenosyl-L-methionine = N(6),N(6),N(6)-trimethyl-L-lysyl(9)-[histone H3] + 3 S-adenosyl-L-homocysteine + 3 H(+). In terms of biological role, histone methyltransferase that specifically trimethylates 'Lys-10' of histone H3 (H3K9me3) in ovary. H3K9me3 represents a specific tag for epigenetic transcriptional repression by recruiting Su(var)205/HP1 to methylated histones. Plays a central role during oogenesis. The chain is Histone-lysine N-methyltransferase eggless (egg) from Drosophila melanogaster (Fruit fly).